The primary structure comprises 545 residues: MLACRKPGLRPPLLLLLPLLGPLGPCSPGTPAAAAPADDAAELEFFTERPLHLVSPAFLSFTIDANLATDPRFFTFLGSSKLRTLARGLAPAYLRFGGNKGDFLIFDPKKEPAFEERSYWLSQSNQDICKSGSIPSDVEEKLRLEWPFQEQVLLREQYQKKFTNSTYSRSSVDMLYTFASCSGLNLIFGVNALLRTTDMHWDSSNAQLLLDYCSSKNYNISWELGNEPNSFQRKAGIFINGRQLGEDFIEFRKLLGKSAFKNAKLYGPDIGQPRRNTVKMLKSFLKAGGEVIDSVTWHHYYVNGRIATKEDFLNPDILDTFISSVQKTLRIVEKIRPLKKVWLGETSSAFGGGAPFLSNTFAAGFMWLDKLGLSARMGIEVVMRQVLFGAGNYHLVDGNFEPLPDYWLSLLFKKLVGNKVLMASVKGPDRSKFRVYLHCTNTKHPRYKEGDLTLYALNLHNVTKHLELPHHLFNKQVDKYLIKPSGTDGLLSKSVQLNGQILKMVDEQTLPALTEKPLHPGSSLGMPPFSYGFFVIRNAKVAACI.

The N-terminal stretch at 1-37 (MLACRKPGLRPPLLLLLPLLGPLGPCSPGTPAAAAPA) is a signal peptide. 64-66 (DAN) contributes to the heparan sulfate group binding site. Residues 112 to 159 (PAFEERSYWLSQSNQDICKSGSIPSDVEEKLRLEWPFQEQVLLREQYQ) constitute a propeptide, linker peptide. An intrachain disulfide couples C129 to C181. Heparan sulfate group is bound at residue 160 to 164 (KKFTN). Residues N164 and N219 are each glycosylated (N-linked (GlcNAc...) asparagine). Catalysis depends on E227, which acts as the Proton donor. Heparan sulfate group-binding positions include 272–282 (QPRRNTVKMLK), H298, and R305. The tract at residues 290 to 419 (EVIDSVTWHH…LLFKKLVGNK (130 aa)) is required for heterodimerization with the heparanase 8 kDa subunit. The active-site Nucleophile is the E345. Heparan sulfate group contacts are provided by residues 350-352 (FGG) and 391-393 (GNY). Cysteines 439 and 544 form a disulfide. Residue N461 is glycosylated (N-linked (GlcNAc...) asparagine). The segment at 529-545 (FSYGFFVIRNAKVAACI) is required for transferring proheparanase to the Golgi apparatus, secretion and subsequent enzyme activity and for enhancement of PKB/AKT1 phosphorylation.

The protein belongs to the glycosyl hydrolase 79 family. As to quaternary structure, heterodimer; heterodimer formation between the 8 kDa and the 50 kDa subunits is required for enzyme activity. Interacts with TF; the interaction, inhibited by heparin, enhances the generation of activated factor X and activates coagulation. Interacts with HRG; the interaction is enhanced at acidic pH, partially inhibits binding of HPSE to cell surface receptors and modulates its enzymatic activity. Interacts with SDC1; the interaction enhances the shedding of SDC1. Interacts with HPSE2. Proteolytically processed. The cleavage of the 65 kDa form leads to the generation of a linker peptide, and the 8 kDa and the 50 kDa products. The active form, the 8/50 kDa heterodimer, is resistant to degradation. Complete removal of the linker peptide appears to be a prerequisite to the complete activation of the enzyme. Post-translationally, N-glycosylated. Glycosylation of the 50 kDa subunit appears to be essential for its solubility. As to expression, highly expressed in placenta and weakly in the kidney, lung, spleen and uterus.

The protein localises to the lysosome membrane. The protein resides in the secreted. Its subcellular location is the nucleus. The enzyme catalyses endohydrolysis of (1-&gt;4)-beta-D-glycosidic bonds of heparan sulfate chains in heparan sulfate proteoglycan.. Inhibited by laminarin sulfate and, to a lower extent, by heparin, sulfamin and EDTA. Activated by calcium and magnesium. Its function is as follows. Endoglycosidase that cleaves heparan sulfate proteoglycans (HSPGs) into heparan sulfate side chains and core proteoglycans. Participates in extracellular matrix (ECM) degradation and remodeling. Selectively cleaves the linkage between a glucuronic acid unit and an N-sulfo glucosamine unit carrying either a 3-O-sulfo or a 6-O-sulfo group. Can also cleave the linkage between a glucuronic acid unit and an N-sulfo glucosamine unit carrying a 2-O-sulfo group, but not linkages between a glucuronic acid unit and a 2-O-sulfated iduronic acid moiety. Essentially inactive at neutral pH but becomes active under acidic conditions such as during tumor invasion and in inflammatory processes. Facilitates cell migration associated with metastasis, wound healing and inflammation. Enhances shedding of syndecans. Acts as a procoagulant by enhancing the generation of activated factor X/F10 in the presence of tissue factor/TF and activated factor VII/F7. Independent of its enzymatic activity, increases cell adhesion to the extracellular matrix (ECM). Enhances AKT1/PKB phosphorylation, possibly via interaction with a lipid raft-resident receptor. Plays a role in the regulation of osteogenesis. Enhances angiogenesis through up-regulation of SRC-mediated activation of VEGF. Implicated in hair follicle inner root sheath differentiation and hair homeostasis. In Bos taurus (Bovine), this protein is Heparanase (HPSE).